Consider the following 391-residue polypeptide: Inner membrane protein YdcO (391 aa).

Residues 1–9 (MRLFSIPPP) lie on the Cytoplasmic side of the membrane. Residues 10–30 (TLLAGFLAVLIGYASSAAIIW) form a helical membrane-spanning segment. Topologically, residues 31–42 (QAAIVAGATTAQ) are periplasmic. A helical transmembrane segment spans residues 43-63 (ISGWMTALGLAMGVSTLTLTL). Over 64 to 93 (WYRVPVLTAWSTPGAALLVTGLQGLTLNEA) the chain is Cytoplasmic. The helical transmembrane segment at 94–114 (IGVFIVTNALIVLCGITGLFA) threads the bilayer. Over 115–123 (RLMRIIPHS) the chain is Periplasmic. A helical transmembrane segment spans residues 124–144 (LAAAMLAGILLRFGLQAFASL). Over 145-167 (DGQFTLCGSMLLVWLATKAVAPR) the chain is Cytoplasmic. The chain crosses the membrane as a helical span at residues 168–188 (YAVIAAMIIGIVIVIAQGDVV). The Periplasmic segment spans residues 189 to 200 (TTDVVFKPVLPT). The chain crosses the membrane as a helical span at residues 201 to 221 (YITPDFSFAHSLSVALPLFLV). Over 222–246 (TMASQNAPGIAAMKAAGYSAPVSPL) the chain is Cytoplasmic. The chain crosses the membrane as a helical span at residues 247-267 (IVFTGLLALVFSPFGVYSVGI). The Periplasmic portion of the chain corresponds to 268–287 (AAITAAICQSPEAHPDKDQR). The helical transmembrane segment at 288 to 308 (WLAAAVAGIFYLLAGLFGSAI) threads the bilayer. The Cytoplasmic portion of the chain corresponds to 309-311 (TGM). Residues 312 to 332 (MAALPVSWIQMLAGLALLSTI) traverse the membrane as a helical segment. The Periplasmic portion of the chain corresponds to 333 to 361 (GGSLYQALHNERERDAAVVAFLVTASGLT). The chain crosses the membrane as a helical span at residues 362–382 (LVGIGSAFWGLIAGGVCYVVL). Topologically, residues 383 to 391 (NLIADRNRY) are cytoplasmic.

Its subcellular location is the cell inner membrane. This is Inner membrane protein YdcO (ydcO) from Escherichia coli (strain K12).